Reading from the N-terminus, the 318-residue chain is Homeobox protein Nkx-2.5 (318 aa).

The homeobox DNA-binding region spans 137-196; sequence RRKPRVLFSQAQVYELERRFKQQRYLSAPERDQLASVLKLTSTQVKIWFQNRRYKCKRQR.

Belongs to the NK-2 homeobox family. As to quaternary structure, homodimer (via the homeobox); binds DNA as homodimer. Interacts (via the homeobox) with TBX5 (via the T-box); this complex binds DNA. Interacts with HIPK1 and HIPK2, but not HIPK3. Interacts with the C-terminal zinc finger of GATA4 through its homeobox domain. Also interacts with JARID2 which represses its ability to activate transcription of ANF. Interacts with FBLIM1. Interacts with TBX18. Interacts with histone methyltransferase NSD2 (via HMG box). Interacts with NEDD9. Interacts with TBX1. As to expression, predominantly in the adult and embryonic heart, and to a lesser extent in lingual muscle, spleen and stomach.

Its subcellular location is the nucleus. In terms of biological role, transcription factor required for the development of the heart and the spleen. During heart development, acts as a transcriptional activator of NPPA/ANF in cooperation with GATA4. May cooperate with TBX2 to negatively modulate expression of NPPA/ANF in the atrioventricular canal. Binds to the core DNA motif of NPPA promoter. Together with PBX1, required for spleen development through a mechanism that involves CDKN2B repression. Positively regulates transcription of genes such as COL3A1 and MMP2, resulting in increased pulmonary endothelial fibrosis in response to hypoxia. In Mus musculus (Mouse), this protein is Homeobox protein Nkx-2.5 (Nkx2-5).